A 142-amino-acid polypeptide reads, in one-letter code: Phosphoribosyl-AMP cyclohydrolase (142 aa).

A Mg(2+)-binding site is contributed by D92. C93 is a Zn(2+) binding site. 2 residues coordinate Mg(2+): D94 and D96. 2 residues coordinate Zn(2+): C109 and C116.

This sequence belongs to the PRA-CH family. In terms of assembly, homodimer. The cofactor is Mg(2+). It depends on Zn(2+) as a cofactor.

The protein localises to the cytoplasm. The catalysed reaction is 1-(5-phospho-beta-D-ribosyl)-5'-AMP + H2O = 1-(5-phospho-beta-D-ribosyl)-5-[(5-phospho-beta-D-ribosylamino)methylideneamino]imidazole-4-carboxamide. It functions in the pathway amino-acid biosynthesis; L-histidine biosynthesis; L-histidine from 5-phospho-alpha-D-ribose 1-diphosphate: step 3/9. Catalyzes the hydrolysis of the adenine ring of phosphoribosyl-AMP. The protein is Phosphoribosyl-AMP cyclohydrolase of Halorhodospira halophila (strain DSM 244 / SL1) (Ectothiorhodospira halophila (strain DSM 244 / SL1)).